A 206-amino-acid polypeptide reads, in one-letter code: MTYIVGLTGGIGSGKTTIANLFTDLGVPLVDADVVAREVVAKDSPLLSKIVEHFGAQILTEQGELNRAALRERVFNHDEDKLWLNNLLHPAIRERMKQKLAEQTAPYTLFVVPLLIENKLTALCDRILVVDVSPQTQLARSSQRDNNNFEQIQRIMNSQVSQQERLKWADDVINNDSELAQNLPHLQQKVLELHQFYLQQAENKNA.

The 201-residue stretch at 4 to 204 folds into the DPCK domain; sequence IVGLTGGIGS…QFYLQQAENK (201 aa). 12 to 17 serves as a coordination point for ATP; sequence GSGKTT.

This sequence belongs to the CoaE family.

The protein resides in the cytoplasm. The enzyme catalyses 3'-dephospho-CoA + ATP = ADP + CoA + H(+). It participates in cofactor biosynthesis; coenzyme A biosynthesis; CoA from (R)-pantothenate: step 5/5. Functionally, catalyzes the phosphorylation of the 3'-hydroxyl group of dephosphocoenzyme A to form coenzyme A. In Haemophilus influenzae (strain 86-028NP), this protein is Dephospho-CoA kinase.